The following is a 466-amino-acid chain: Ribulose bisphosphate carboxylase large chain (466 aa).

Lysine 5 carries the N6,N6,N6-trimethyllysine modification. Substrate is bound by residues asparagine 114 and threonine 164. The active-site Proton acceptor is lysine 166. Lysine 168 contacts substrate. Positions 192, 194, and 195 each coordinate Mg(2+). The residue at position 192 (lysine 192) is an N6-carboxylysine. The active-site Proton acceptor is the histidine 285. Substrate contacts are provided by arginine 286, histidine 318, and serine 370.

This sequence belongs to the RuBisCO large chain family. Type I subfamily. Heterohexadecamer of 8 large chains and 8 small chains; disulfide-linked. The disulfide link is formed within the large subunit homodimers. Mg(2+) serves as cofactor. Post-translationally, the disulfide bond which can form in the large chain dimeric partners within the hexadecamer appears to be associated with oxidative stress and protein turnover.

It localises to the plastid. The protein resides in the chloroplast. The catalysed reaction is 2 (2R)-3-phosphoglycerate + 2 H(+) = D-ribulose 1,5-bisphosphate + CO2 + H2O. It catalyses the reaction D-ribulose 1,5-bisphosphate + O2 = 2-phosphoglycolate + (2R)-3-phosphoglycerate + 2 H(+). RuBisCO catalyzes two reactions: the carboxylation of D-ribulose 1,5-bisphosphate, the primary event in carbon dioxide fixation, as well as the oxidative fragmentation of the pentose substrate in the photorespiration process. Both reactions occur simultaneously and in competition at the same active site. This Gonopterodendron arboreum (Maracaibo lignum-vitae) protein is Ribulose bisphosphate carboxylase large chain.